A 195-amino-acid polypeptide reads, in one-letter code: ATP-dependent Clp protease proteolytic subunit (195 aa).

The Nucleophile role is filled by serine 98. The active site involves histidine 123.

This sequence belongs to the peptidase S14 family. Fourteen ClpP subunits assemble into 2 heptameric rings which stack back to back to give a disk-like structure with a central cavity, resembling the structure of eukaryotic proteasomes.

It is found in the cytoplasm. The catalysed reaction is Hydrolysis of proteins to small peptides in the presence of ATP and magnesium. alpha-casein is the usual test substrate. In the absence of ATP, only oligopeptides shorter than five residues are hydrolyzed (such as succinyl-Leu-Tyr-|-NHMec, and Leu-Tyr-Leu-|-Tyr-Trp, in which cleavage of the -Tyr-|-Leu- and -Tyr-|-Trp bonds also occurs).. In terms of biological role, cleaves peptides in various proteins in a process that requires ATP hydrolysis. Has a chymotrypsin-like activity. Plays a major role in the degradation of misfolded proteins. The sequence is that of ATP-dependent Clp protease proteolytic subunit from Alkaliphilus oremlandii (strain OhILAs) (Clostridium oremlandii (strain OhILAs)).